A 207-amino-acid polypeptide reads, in one-letter code: Ciliary microtubule-associated protein 3 (207 aa).

In terms of assembly, interacts with proteins involved in ciliary transport, including ARL13B, CETN1, KIF3A, RAB6A, RAB8A, TUBB1 and TUBG1. Interacts with AURKA. As to expression, expressed in tissues rich in ciliated cells, such as lung, kidney, vas deferens and testis. Both isoforms 1 and 2 are expressed in testis.

It localises to the golgi apparatus. It is found in the golgi stack. Its subcellular location is the trans-Golgi network. The protein resides in the nucleus. The protein localises to the cytoplasm. It localises to the cytoplasmic vesicle. Its function is as follows. During primary cilia disassembly, involved in cilia disassembly. Required specifically to control cilia retraction as well as the liberation and duplication of the basal body/centrosome. May act by stimulating AURKA activity at the basal body in a cell cycle-dependent manner. In Mus musculus (Mouse), this protein is Ciliary microtubule-associated protein 3 (Cimap3).